Here is a 906-residue protein sequence, read N- to C-terminus: Ribonucleoside-diphosphate reductase large subunit-like protein (906 aa).

2 disordered regions span residues Met-1–Thr-70 and Val-89–Phe-129. The span at Pro-98 to Arg-109 shows a compositional bias: polar residues.

Belongs to the ribonucleoside diphosphate reductase large chain family.

The protein resides in the virion. The protein localises to the host cytoplasm. Functionally, does not possess a ribonucleotide reductase activity. Betaherpesviruses probably use another strategy to expand the dNTP pool in a quiescent host cell. The polypeptide is Ribonucleoside-diphosphate reductase large subunit-like protein (Human cytomegalovirus (strain AD169) (HHV-5)).